We begin with the raw amino-acid sequence, 144 residues long: MELNNLKPAAGAKHAKRRVGRGIGSGLGKTAGRGHKGQKSRSGGFHKVGFEGGQMPLQRRLPKRGFTSLTKEFVGEVRLGDLEKLPVDEIDLLALKQAGLVGELTKSAKIIATGELKRKIVVKGLGATKGARAAIEAAGGSFAE.

The segment at 1 to 56 is disordered; it reads MELNNLKPAAGAKHAKRRVGRGIGSGLGKTAGRGHKGQKSRSGGFHKVGFEGGQMP. The segment covering 21–31 has biased composition (gly residues); the sequence is RGIGSGLGKTA.

Belongs to the universal ribosomal protein uL15 family. In terms of assembly, part of the 50S ribosomal subunit.

Its function is as follows. Binds to the 23S rRNA. The sequence is that of Large ribosomal subunit protein uL15 from Burkholderia ambifaria (strain MC40-6).